The chain runs to 461 residues: Bifunctional protein GlmU (461 aa).

The tract at residues 1–229 (MNKYVVILAA…FSESLGVNDR (229 aa)) is pyrophosphorylase. UDP-N-acetyl-alpha-D-glucosamine contacts are provided by residues 8–11 (LAAG), Lys22, Gln72, and 77–78 (GT). Asp102 provides a ligand contact to Mg(2+). Gly139, Glu154, Asn169, and Asn227 together coordinate UDP-N-acetyl-alpha-D-glucosamine. Asn227 is a Mg(2+) binding site. Residues 230–250 (IALAQATKIMQRRINEEHMRN) form a linker region. An N-acetyltransferase region spans residues 251–461 (GVSFIDPDTA…LPLAKDKEWE (211 aa)). The UDP-N-acetyl-alpha-D-glucosamine site is built by Arg332 and Lys350. His362 (proton acceptor) is an active-site residue. UDP-N-acetyl-alpha-D-glucosamine is bound by residues Tyr365 and Asn376. Residues 385 to 386 (NY), Ala422, and Arg439 each bind acetyl-CoA.

This sequence in the N-terminal section; belongs to the N-acetylglucosamine-1-phosphate uridyltransferase family. The protein in the C-terminal section; belongs to the transferase hexapeptide repeat family. Homotrimer. It depends on Mg(2+) as a cofactor.

The protein resides in the cytoplasm. It catalyses the reaction alpha-D-glucosamine 1-phosphate + acetyl-CoA = N-acetyl-alpha-D-glucosamine 1-phosphate + CoA + H(+). It carries out the reaction N-acetyl-alpha-D-glucosamine 1-phosphate + UTP + H(+) = UDP-N-acetyl-alpha-D-glucosamine + diphosphate. It functions in the pathway nucleotide-sugar biosynthesis; UDP-N-acetyl-alpha-D-glucosamine biosynthesis; N-acetyl-alpha-D-glucosamine 1-phosphate from alpha-D-glucosamine 6-phosphate (route II): step 2/2. The protein operates within nucleotide-sugar biosynthesis; UDP-N-acetyl-alpha-D-glucosamine biosynthesis; UDP-N-acetyl-alpha-D-glucosamine from N-acetyl-alpha-D-glucosamine 1-phosphate: step 1/1. Its pathway is bacterial outer membrane biogenesis; LPS lipid A biosynthesis. In terms of biological role, catalyzes the last two sequential reactions in the de novo biosynthetic pathway for UDP-N-acetylglucosamine (UDP-GlcNAc). The C-terminal domain catalyzes the transfer of acetyl group from acetyl coenzyme A to glucosamine-1-phosphate (GlcN-1-P) to produce N-acetylglucosamine-1-phosphate (GlcNAc-1-P), which is converted into UDP-GlcNAc by the transfer of uridine 5-monophosphate (from uridine 5-triphosphate), a reaction catalyzed by the N-terminal domain. This is Bifunctional protein GlmU from Lactobacillus johnsonii (strain CNCM I-12250 / La1 / NCC 533).